Reading from the N-terminus, the 608-residue chain is Protein FAM151A (608 aa).

The chain crosses the membrane as a helical span at residues 14-34; sequence WILAGSVSMTLVLAISMILGL. Residues 588–608 form a disordered region; that stretch reads RHRPSSRTGPSYVEGFPGESR.

It belongs to the menorin family.

It localises to the membrane. The sequence is that of Protein FAM151A (Fam151a) from Rattus norvegicus (Rat).